The primary structure comprises 135 residues: Mini-ribonuclease 3 (135 aa).

Asp19 is an active-site residue.

It belongs to the MrnC RNase family. Homodimer. Requires Mg(2+) as cofactor.

Its subcellular location is the cytoplasm. Involved in correct processing of both the 5' and 3' ends of 23S rRNA precursor. Processes 30S rRNA precursor transcript even in absence of ribonuclease 3 (Rnc); Rnc processes 30S rRNA into smaller rRNA precursors. This is Mini-ribonuclease 3 from Gloeobacter violaceus (strain ATCC 29082 / PCC 7421).